The sequence spans 777 residues: Probable aconitate hydratase, mitochondrial (777 aa).

The N-terminal 26 residues, 1 to 26 (MNSLLRLSHLAGPAHYRALHSSSSIW), are a transit peptide targeting the mitochondrion. Residues Q96 and 189–191 (DSH) contribute to the substrate site. 3 residues coordinate [4Fe-4S] cluster: C382, C445, and C448. Substrate contacts are provided by R471 and R476. The interval 534–555 (YDPGEDTFQAPSGSGQVDVSPS) is disordered. The segment covering 542 to 555 (QAPSGSGQVDVSPS) has biased composition (polar residues). Substrate-binding positions include R601 and 664–665 (SR).

The protein belongs to the aconitase/IPM isomerase family. In terms of assembly, monomer. [4Fe-4S] cluster is required as a cofactor.

It is found in the mitochondrion. It carries out the reaction citrate = D-threo-isocitrate. The protein operates within carbohydrate metabolism; tricarboxylic acid cycle; isocitrate from oxaloacetate: step 2/2. Functionally, catalyzes the isomerization of citrate to isocitrate via cis-aconitate. In Caenorhabditis elegans, this protein is Probable aconitate hydratase, mitochondrial.